A 563-amino-acid chain; its full sequence is MGLSPSIYKDVGDLSSLSTDVIIIGGGATGAGIARDCALRGIDCILLERRDIATGATGRNHGLLHSGARYAVNDQESAEECIKENRILRKIARHCVDETEGLFITLPEDSLDYQKTFLESCAKSGIDAQAIDPELAKIMEPSVNPDLVGAVVVPDGSIDPFRLTASNMMDATENGAKMFTYCEVKNLIREGGKVIGVNAYDHKNRRERQFFAPLVVNAGGIWGQGIAEYADLKIKMFPAKGALLVMGHRINKLVINRCRKPADADILVPGDTICVIGTTSSRIPYDQIDNMEVTPEEVDILFREGEKLAPSLRHTRVLRAYAGVRPLVASDDDPSGRNVSRGIVLLDHAERDGLDGFITITGGKLMTYRLMAEWATDLVCKKLNKTARCVTAEQPLPGSTESRQETNQKVISLPSTIRYSAVYRHGSRATRLLEKERLDRSMVCECEAVTAGEVRYAVDELDVNNLVDLRRRSRVGMGTCQAELCACRAAGLMNRFEVATPRQSTTQLSAFMEERWRGIEPIAWGEAIREAEFTSWMYASVLGLNDVKPLDEQAQQGTDSNEF.

20-48 (DVIIIGGGATGAGIARDCALRGIDCILLE) provides a ligand contact to FAD.

The protein belongs to the FAD-dependent glycerol-3-phosphate dehydrogenase family. Composed of a catalytic GlpA/B dimer and of membrane bound GlpC. Requires FAD as cofactor. FMN serves as cofactor.

The protein localises to the cell inner membrane. The catalysed reaction is a quinone + sn-glycerol 3-phosphate = dihydroxyacetone phosphate + a quinol. It functions in the pathway polyol metabolism; glycerol degradation via glycerol kinase pathway; glycerone phosphate from sn-glycerol 3-phosphate (anaerobic route): step 1/1. This Haemophilus influenzae (strain ATCC 51907 / DSM 11121 / KW20 / Rd) protein is Anaerobic glycerol-3-phosphate dehydrogenase subunit A (glpA).